The following is a 333-amino-acid chain: Holliday junction branch migration complex subunit RuvB (333 aa).

A large ATPase domain (RuvB-L) region spans residues 1-181; the sequence is MNDILNKEPM…FGISSHMEYY (181 aa). Residues Leu-20, Arg-21, Gly-62, Lys-65, Thr-66, Thr-67, 128-130, Arg-171, Tyr-181, and Arg-218 contribute to the ATP site; that span reads EDF. Thr-66 serves as a coordination point for Mg(2+). Positions 182-252 are small ATPAse domain (RuvB-S); it reads QERDLEEIVK…ITDKALTILD (71 aa). Residues 255 to 333 form a head domain (RuvB-H) region; that stretch reads AAGLDYIDQK…HLGYVYNEEE (79 aa). 3 residues coordinate DNA: Arg-291, Arg-310, and Arg-315.

This sequence belongs to the RuvB family. Homohexamer. Forms an RuvA(8)-RuvB(12)-Holliday junction (HJ) complex. HJ DNA is sandwiched between 2 RuvA tetramers; dsDNA enters through RuvA and exits via RuvB. An RuvB hexamer assembles on each DNA strand where it exits the tetramer. Each RuvB hexamer is contacted by two RuvA subunits (via domain III) on 2 adjacent RuvB subunits; this complex drives branch migration. In the full resolvosome a probable DNA-RuvA(4)-RuvB(12)-RuvC(2) complex forms which resolves the HJ.

It localises to the cytoplasm. The enzyme catalyses ATP + H2O = ADP + phosphate + H(+). In terms of biological role, the RuvA-RuvB-RuvC complex processes Holliday junction (HJ) DNA during genetic recombination and DNA repair, while the RuvA-RuvB complex plays an important role in the rescue of blocked DNA replication forks via replication fork reversal (RFR). RuvA specifically binds to HJ cruciform DNA, conferring on it an open structure. The RuvB hexamer acts as an ATP-dependent pump, pulling dsDNA into and through the RuvAB complex. RuvB forms 2 homohexamers on either side of HJ DNA bound by 1 or 2 RuvA tetramers; 4 subunits per hexamer contact DNA at a time. Coordinated motions by a converter formed by DNA-disengaged RuvB subunits stimulates ATP hydrolysis and nucleotide exchange. Immobilization of the converter enables RuvB to convert the ATP-contained energy into a lever motion, pulling 2 nucleotides of DNA out of the RuvA tetramer per ATP hydrolyzed, thus driving DNA branch migration. The RuvB motors rotate together with the DNA substrate, which together with the progressing nucleotide cycle form the mechanistic basis for DNA recombination by continuous HJ branch migration. Branch migration allows RuvC to scan DNA until it finds its consensus sequence, where it cleaves and resolves cruciform DNA. This Lactococcus lactis subsp. cremoris (strain SK11) protein is Holliday junction branch migration complex subunit RuvB.